The sequence spans 631 residues: MEKNGTVHTGTVRQSLGLSLAALGVVYGDIGTSPLYAMRECFHGTHPHPATPDNVLGVLSLIVWALILIVSLKYLVFVLRADNRGEGGILALTALLNPWGDENRPPRKVLVFLGLFGAALLYGDGTLTPAISVLSAIEGLKIATPLFHPYIVPITVVILILLFLIQHRGTARVGALFGPVMVLWFTVLALLGIRGIMMAPEVLGALNPLHAVLFFVRDGWSGFQVLGAVFLVVTGGEALYADMGHFGRLPIRLAWFCCVLPALLLNYFGQGALLLSDPSEATEPFYHLAPPWALYPLVLLATLATIIASQAVISGVFSLTRQAIQLRLSPRMRIVQTSSEEIGQIYIPAVNWALMLATITLVAGFGSSSGLAAAYGVAVATTMVITALLVRFVMLERWHWHPLAVAGLTVVFLTVDLAFFGANILKVGAGGWIPLAAGLAVFTVMITWRRGRELVTTHLLAQATPLPSFLEELAAKPPQRVPGTAVFMSGRLFPAPPTLIHHLEHNKVLHEQVVILTVLTEDIPRVSASERIELKRLGQGFYRLIVRYGFMQSPNVPVILRECEPLGLVTDPETTTFYLGRETLIPTEKVSGMPHWREKLFAFMSRNSLQATAFYNLPPDRVVELGQQVEI.

Transmembrane regions (helical) follow at residues 16 to 36 (LGLS…SPLY), 58 to 78 (VLSL…LVFV), 109 to 129 (VLVF…TLTP), 145 to 165 (PLFH…LFLI), 173 to 193 (VGAL…LLGI), 219 to 239 (GWSG…GEAL), 255 to 275 (WFCC…ALLL), 288 to 308 (LAPP…TIIA), 345 to 365 (IYIP…VAGF), 370 to 390 (GLAA…ALLV), 402 to 422 (PLAV…FFGA), and 427 to 447 (VGAG…VMIT).

Belongs to the HAK/KUP transporter (TC 2.A.72) family.

It localises to the cell inner membrane. The catalysed reaction is K(+)(in) + H(+)(in) = K(+)(out) + H(+)(out). Functionally, transport of potassium into the cell. Likely operates as a K(+):H(+) symporter. This Geobacter sulfurreducens (strain ATCC 51573 / DSM 12127 / PCA) protein is Probable potassium transport system protein Kup 1.